A 225-amino-acid polypeptide reads, in one-letter code: Immune-associated nucleotide-binding protein 1 (225 aa).

Positions 6–214 (CPVTNLLLLG…YTENMHRKIK (209 aa)) constitute an AIG1-type G domain. The segment at 15 to 22 (GRSENGKS) is G1. 15–23 (GRSENGKSS) is a binding site for GTP. The tract at residues 42 to 46 (DMDQR) is G2. Positions 64–67 (DTPG) are G3. Residues 134–137 (TGGD) are G4. Positions 173–175 (NNK) are G5. GTP is bound at residue N174.

This sequence belongs to the TRAFAC class TrmE-Era-EngA-EngB-Septin-like GTPase superfamily. AIG1/Toc34/Toc159-like paraseptin GTPase family. IAN subfamily. In terms of tissue distribution, mostly expressed in pollen.

This chain is Immune-associated nucleotide-binding protein 1, found in Arabidopsis thaliana (Mouse-ear cress).